Reading from the N-terminus, the 475-residue chain is uncharacterized protein (475 aa).

The interval N42–N292 is disordered. 2 stretches are compositionally biased toward basic and acidic residues: residues E59–D72 and I119–Q134. Polar residues-rich tracts occupy residues I150–I159 and N220–D242. Residues S243–G263 are compositionally biased toward low complexity. Residues F277 to R289 are compositionally biased toward basic residues. The HTH La-type RNA-binding domain maps to N319–T408. Residue T408 is modified to Phosphothreonine. The residue at position 410 (S410) is a Phosphoserine.

It localises to the cytoplasm. This is an uncharacterized protein from Schizosaccharomyces pombe (strain 972 / ATCC 24843) (Fission yeast).